The sequence spans 429 residues: Cyclin-B2-2 (429 aa).

A disordered region spans residues 66 to 98 (SQRKQESCDKKKLDSLHPSISRSQEETKKLKPS). Residues 68-80 (RKQESCDKKKLDS) show a composition bias toward basic and acidic residues.

The protein belongs to the cyclin family. Cyclin AB subfamily. As to quaternary structure, interacts with CDC20-1 and CDC20-2. As to expression, expressed in roots.

This Arabidopsis thaliana (Mouse-ear cress) protein is Cyclin-B2-2 (CYCB2-2).